A 214-amino-acid chain; its full sequence is Cytochrome b (214 aa).

A run of 4 helical transmembrane segments spans residues 31-51, 75-96, 111-131, and 176-196; these read FGSMLLSCSMIQIMTGFFLAI, WIMQNTHAIGASLFFICIYIHI, WLSGTTLLIILMATAFFGYVL, and FFALHFILPFAIISMSSIHIL. Positions 81 and 95 each coordinate heme b. Histidine 180 and histidine 194 together coordinate heme b. Residue histidine 199 participates in a ubiquinone binding.

Belongs to the cytochrome b family. As to quaternary structure, the cytochrome bc1 complex contains 3 respiratory subunits (MT-CYB, CYC1 and UQCRFS1), 2 core proteins (UQCRC1 and UQCRC2) and probably 6 low-molecular weight proteins. The cofactor is heme b.

The protein resides in the mitochondrion inner membrane. Component of the ubiquinol-cytochrome c reductase complex (complex III or cytochrome b-c1 complex) that is part of the mitochondrial respiratory chain. The b-c1 complex mediates electron transfer from ubiquinol to cytochrome c. Contributes to the generation of a proton gradient across the mitochondrial membrane that is then used for ATP synthesis. The polypeptide is Cytochrome b (MT-CYB) (Trimeresurus stejnegeri (Chinese green tree viper)).